Reading from the N-terminus, the 224-residue chain is ATP phosphoribosyltransferase (224 aa).

The protein belongs to the ATP phosphoribosyltransferase family. Short subfamily. In terms of assembly, heteromultimer composed of HisG and HisZ subunits.

The protein resides in the cytoplasm. The enzyme catalyses 1-(5-phospho-beta-D-ribosyl)-ATP + diphosphate = 5-phospho-alpha-D-ribose 1-diphosphate + ATP. It participates in amino-acid biosynthesis; L-histidine biosynthesis; L-histidine from 5-phospho-alpha-D-ribose 1-diphosphate: step 1/9. Its function is as follows. Catalyzes the condensation of ATP and 5-phosphoribose 1-diphosphate to form N'-(5'-phosphoribosyl)-ATP (PR-ATP). Has a crucial role in the pathway because the rate of histidine biosynthesis seems to be controlled primarily by regulation of HisG enzymatic activity. The sequence is that of ATP phosphoribosyltransferase from Cupriavidus pinatubonensis (strain JMP 134 / LMG 1197) (Cupriavidus necator (strain JMP 134)).